The chain runs to 606 residues: Aspartate--tRNA(Asp/Asn) ligase (606 aa).

L-aspartate is bound at residue Glu-187. Residues 211 to 214 (QQFK) are aspartate. L-aspartate-binding residues include Arg-233 and His-461. Residue 233-235 (RDE) coordinates ATP. Glu-495 serves as a coordination point for ATP. An L-aspartate-binding site is contributed by Arg-502. An ATP-binding site is contributed by 547–550 (GLDR).

It belongs to the class-II aminoacyl-tRNA synthetase family. Type 1 subfamily. Homodimer.

It is found in the cytoplasm. It catalyses the reaction tRNA(Asx) + L-aspartate + ATP = L-aspartyl-tRNA(Asx) + AMP + diphosphate. Aspartyl-tRNA synthetase with relaxed tRNA specificity since it is able to aspartylate not only its cognate tRNA(Asp) but also tRNA(Asn). Reaction proceeds in two steps: L-aspartate is first activated by ATP to form Asp-AMP and then transferred to the acceptor end of tRNA(Asp/Asn). The chain is Aspartate--tRNA(Asp/Asn) ligase from Chlorobium phaeobacteroides (strain DSM 266 / SMG 266 / 2430).